Here is a 358-residue protein sequence, read N- to C-terminus: Putative myc-like protein MYCLP1 (358 aa).

Disordered stretches follow at residues 150–171 (ACSRSESPSDSEGEEIDVTVKK) and 219–245 (QEGAPKRMPPKEALEREAPGGKDDKED). The segment covering 227-242 (PPKEALEREAPGGKDD) has biased composition (basic and acidic residues). The 53-residue stretch at 274–326 (WTKKKYHSYLERKRRNDQRSRFLALRDEVPALASCSRVSKVMILVKATEYLHE) folds into the bHLH domain.

Efficient DNA binding requires dimerization with another bHLH protein. Binds DNA as a heterodimer with MAX. In terms of tissue distribution, detected in adult testis.

The protein localises to the nucleus. The protein is Putative myc-like protein MYCLP1 (MYCLP1) of Homo sapiens (Human).